The following is a 453-amino-acid chain: HTH-type pyridoxine biosynthesis transcriptional regulator PdxR (453 aa).

Residues 15–83 (TSIPTQLTEQ…RGSGTTINPD (69 aa)) form the HTH gntR-type domain. The H-T-H motif DNA-binding region spans 43–62 (SRSLSTQLGVSRGSVVTAYD).

This sequence in the C-terminal section; belongs to the class-I pyridoxal-phosphate-dependent aminotransferase family. Pyridoxal 5'-phosphate serves as cofactor.

Functionally, may have a regulatory function in pyridoxine biosynthesis. Is said to also have an aminotransferase activity in valine biosynthesis as a double inactivation of ilvE and pdxR results in an auxotrophic requirement for valine. The sequence is that of HTH-type pyridoxine biosynthesis transcriptional regulator PdxR (pdxR) from Corynebacterium glutamicum (strain ATCC 13032 / DSM 20300 / JCM 1318 / BCRC 11384 / CCUG 27702 / LMG 3730 / NBRC 12168 / NCIMB 10025 / NRRL B-2784 / 534).